The chain runs to 698 residues: Elongation factor G 1 (698 aa).

One can recognise a tr-type G domain in the interval 8–290; it reads ERYRNIGICA…AVIEFLPSPT (283 aa). GTP contacts are provided by residues 17-24, 88-92, and 142-145; these read AHVDAGKT, DTPGH, and NKMD.

The protein belongs to the TRAFAC class translation factor GTPase superfamily. Classic translation factor GTPase family. EF-G/EF-2 subfamily.

The protein resides in the cytoplasm. Functionally, catalyzes the GTP-dependent ribosomal translocation step during translation elongation. During this step, the ribosome changes from the pre-translocational (PRE) to the post-translocational (POST) state as the newly formed A-site-bound peptidyl-tRNA and P-site-bound deacylated tRNA move to the P and E sites, respectively. Catalyzes the coordinated movement of the two tRNA molecules, the mRNA and conformational changes in the ribosome. This is Elongation factor G 1 from Vibrio cholerae serotype O1 (strain ATCC 39315 / El Tor Inaba N16961).